Reading from the N-terminus, the 283-residue chain is D-alanine aminotransferase (283 aa).

Position 32 (Y32) interacts with substrate. A pyridoxal 5'-phosphate-binding site is contributed by R51. Residues R99 and H101 each contribute to the substrate site. K146 acts as the Proton acceptor in catalysis. N6-(pyridoxal phosphate)lysine is present on K146. E178 provides a ligand contact to pyridoxal 5'-phosphate.

It belongs to the class-IV pyridoxal-phosphate-dependent aminotransferase family. Homodimer. The cofactor is pyridoxal 5'-phosphate.

The catalysed reaction is D-alanine + 2-oxoglutarate = D-glutamate + pyruvate. Functionally, acts on the D-isomers of alanine, leucine, aspartate, glutamate, aminobutyrate, norvaline and asparagine. The enzyme transfers an amino group from a substrate D-amino acid to the pyridoxal phosphate cofactor to form pyridoxamine and an alpha-keto acid in the first half-reaction. The second half-reaction is the reverse of the first, transferring the amino group from the pyridoxamine to a second alpha-keto acid to form the product D-amino acid via a ping-pong mechanism. This is an important process in the formation of D-alanine and D-glutamate, which are essential bacterial cell wall components. The polypeptide is D-alanine aminotransferase (dat) (Lysinibacillus sphaericus (Bacillus sphaericus)).